A 28-amino-acid polypeptide reads, in one-letter code: Phospholipase A2 pseudexin C chain (28 aa).

Tyr-28 lines the Ca(2+) pocket.

This sequence belongs to the phospholipase A2 family. Group I subfamily. The cofactor is Ca(2+). Expressed by the venom gland.

It is found in the secreted. It carries out the reaction a 1,2-diacyl-sn-glycero-3-phosphocholine + H2O = a 1-acyl-sn-glycero-3-phosphocholine + a fatty acid + H(+). PLA2 catalyzes the calcium-dependent hydrolysis of the 2-acyl groups in 3-sn-phosphoglycerides. The sequence is that of Phospholipase A2 pseudexin C chain from Pseudechis porphyriacus (Red-bellied black snake).